Consider the following 210-residue polypeptide: Thymidylate kinase (210 aa).

Residue 13-20 (GLEGAGKS) participates in ATP binding.

It belongs to the thymidylate kinase family.

It carries out the reaction dTMP + ATP = dTDP + ADP. Phosphorylation of dTMP to form dTDP in both de novo and salvage pathways of dTTP synthesis. The polypeptide is Thymidylate kinase (Shewanella loihica (strain ATCC BAA-1088 / PV-4)).